The following is a 176-amino-acid chain: Large ribosomal subunit protein uL15 (176 aa).

Residues 1–13 (MKLNDLRDNEGAR) are compositionally biased toward basic and acidic residues. 2 disordered regions span residues 1–48 (MKLN…AIKG) and 151–176 (IPAAQPEHEKKAARSEANKKAKAKAE). The span at 21–35 (RGIGSGKGKTGGRGQ) shows a compositional bias: gly residues. The span at 156 to 176 (PEHEKKAARSEANKKAKAKAE) shows a compositional bias: basic and acidic residues.

It belongs to the universal ribosomal protein uL15 family. In terms of assembly, part of the 50S ribosomal subunit.

Binds to the 23S rRNA. The protein is Large ribosomal subunit protein uL15 of Erythrobacter litoralis (strain HTCC2594).